A 178-amino-acid polypeptide reads, in one-letter code: RNA replicase polyprotein (178 aa).

This sequence belongs to the tymovirus NS35 RNA replicase polyprotein family.

The enzyme catalyses RNA(n) + a ribonucleoside 5'-triphosphate = RNA(n+1) + diphosphate. The polypeptide is RNA replicase polyprotein (Physalis heterophylla (PhMV)).